We begin with the raw amino-acid sequence, 246 residues long: uncharacterized protein (246 aa).

10–34 provides a ligand contact to NADP(+); that stretch reads VITGASSGIGEETVNLLSENGAKLV. S140 contributes to the substrate binding site. The Proton acceptor role is filled by Y153.

This sequence belongs to the short-chain dehydrogenases/reductases (SDR) family.

This is an uncharacterized protein from Staphylococcus saprophyticus subsp. saprophyticus (strain ATCC 15305 / DSM 20229 / NCIMB 8711 / NCTC 7292 / S-41).